Here is a 1628-residue protein sequence, read N- to C-terminus: Lysine-specific histone demethylase 1 homolog 3 (1628 aa).

Positions 1-71 (MDGKEKKSGS…KKLSALGKDS (71 aa)) are disordered. Residues 19 to 28 (FDDDADDDEP) show a composition bias toward acidic residues. Positions 43–64 (KDKVETESTGKQRQKQVVEKKL) are enriched in basic and acidic residues. The SWIRM domain maps to 378–478 (GRAAAVTAGL…AGISSVNGKA (101 aa)). FAD-binding residues include Glu-647, Arg-649, Arg-655, and Glu-1077. The segment at 1271–1317 (SGKKSLRQANTTNTSRIRRKLNSPDTDSKGKLSNGNDVKTDEEFEDN) is disordered.

This sequence belongs to the flavin monoamine oxidase family. The cofactor is FAD.

Functionally, probable histone demethylase that reduces the levels of histone H3 'Lys-4' methylation in chromatin. This chain is Lysine-specific histone demethylase 1 homolog 3 (LDL3), found in Arabidopsis thaliana (Mouse-ear cress).